The following is an 85-amino-acid chain: Platelet factor 4 (85 aa).

Disulfide bonds link Cys-25–Cys-51 and Cys-27–Cys-67. Ser-41 is subject to Phosphoserine. Position 76-82 (76-82) interacts with heparin; that stretch reads KKIIKRL.

This sequence belongs to the intercrine alpha (chemokine CxC) family. In terms of assembly, homotetramer. Interacts with TNFAIP6 (via Link domain). Interacts with CCR1. Interacts with CXCR3. Interacts with THBD; this interaction enhances generation of activated protein C.

Its subcellular location is the secreted. Functionally, chemokine released during platelet aggregation that plays a role in different biological processes including hematopoiesis, cell proliferation, differentiation, and activation. Acts via different functional receptors including CCR1, CXCR3A or CXCR3B. Upon interaction with CXCR3A receptor, induces activated T-lymphocytes migration mediated via downstream Ras/extracellular signal-regulated kinase (ERK) signaling. Neutralizes the anticoagulant effect of heparin by binding more strongly to heparin than to the chondroitin-4-sulfate chains of the carrier molecule. Plays a role in the inhibition of hematopoiesis and in the maintenance of hematopoietic stem cell (HSC) quiescence. Chemotactic for neutrophils and monocytes via CCR1. Inhibits endothelial cell proliferation. In cooperation with toll-like receptor 8/TLR8, induces chromatin remodeling and activates inflammatory gene expression via the TBK1-IRF5 axis. In addition, induces myofibroblast differentiation and collagen synthesis in different precursor cells, including endothelial cells, by stimulating endothelial-to-mesenchymal transition. Interacts with thrombomodulin/THBD to enhance the activation of protein C and thus potentiates its anticoagulant activity. The chain is Platelet factor 4 (PF4) from Ovis aries (Sheep).